A 429-amino-acid polypeptide reads, in one-letter code: UDP-N-acetylglucosamine 1-carboxyvinyltransferase (429 aa).

Lys22–Asn23 serves as a coordination point for phosphoenolpyruvate. UDP-N-acetyl-alpha-D-glucosamine is bound at residue Arg93. Cys117 serves as the catalytic Proton donor. Cys117 carries the post-translational modification 2-(S-cysteinyl)pyruvic acid O-phosphothioketal. Residues Arg122–Leu126, Asp307, and Val329 each bind UDP-N-acetyl-alpha-D-glucosamine.

This sequence belongs to the EPSP synthase family. MurA subfamily.

It localises to the cytoplasm. It carries out the reaction phosphoenolpyruvate + UDP-N-acetyl-alpha-D-glucosamine = UDP-N-acetyl-3-O-(1-carboxyvinyl)-alpha-D-glucosamine + phosphate. It participates in cell wall biogenesis; peptidoglycan biosynthesis. In terms of biological role, cell wall formation. Adds enolpyruvyl to UDP-N-acetylglucosamine. This Chloroherpeton thalassium (strain ATCC 35110 / GB-78) protein is UDP-N-acetylglucosamine 1-carboxyvinyltransferase.